A 135-amino-acid chain; its full sequence is Protein PsiE homolog (135 aa).

Helical transmembrane passes span 20 to 40 (VGLL…TIHL), 54 to 74 (YLLI…ALIV), 82 to 102 (HFPL…LIIV), and 107 to 127 (PIDT…LYLA).

Belongs to the PsiE family.

The protein resides in the cell inner membrane. The polypeptide is Protein PsiE homolog (Serratia proteamaculans (strain 568)).